A 291-amino-acid polypeptide reads, in one-letter code: Flavin-dependent thymidylate synthase (291 aa).

The ThyX domain occupies 31-241 (GFVRVVDYMG…PMVHAAFVEY (211 aa)). Residues Ser77, 100-102 (RHR), and Glu108 each bind FAD. DUMP contacts are provided by residues 97-100 (QWVR), 108-112 (EYSAR), and Arg180. A ThyX motif motif is present at residues 100-110 (RHRTASINEYS). 196 to 198 (NLH) contacts FAD. Residue Arg207 coordinates dUMP. The active-site Involved in ionization of N3 of dUMP, leading to its activation is the Arg207.

It belongs to the thymidylate synthase ThyX family. In terms of assembly, homotetramer. The cofactor is FAD.

The catalysed reaction is dUMP + (6R)-5,10-methylene-5,6,7,8-tetrahydrofolate + NADPH + H(+) = dTMP + (6S)-5,6,7,8-tetrahydrofolate + NADP(+). The protein operates within pyrimidine metabolism; dTTP biosynthesis. Its function is as follows. Catalyzes the reductive methylation of 2'-deoxyuridine-5'-monophosphate (dUMP) to 2'-deoxythymidine-5'-monophosphate (dTMP) while utilizing 5,10-methylenetetrahydrofolate (mTHF) as the methyl donor, and NADPH and FADH(2) as the reductant. The polypeptide is Flavin-dependent thymidylate synthase (Anaplasma marginale (strain St. Maries)).